The primary structure comprises 391 residues: 12-oxophytodienoate reductase 3 (391 aa).

N-acetylmethionine is present on M1. At T2 the chain carries N-acetylthreonine; in 12-oxophytodienoate reductase 3, N-terminally processed. FMN is bound by residues 31 to 33 (PMT), G64, and Q106. Position 186 (H186) interacts with substrate. The Proton donor role is filled by Y191. An FMN-binding site is contributed by R238. R284 is a substrate binding site. FMN contacts are provided by residues 320–322 (SGG) and 343–344 (GR). The Microbody targeting signal signature appears at 389 to 391 (SRL).

This sequence belongs to the NADH:flavin oxidoreductase/NADH oxidase family. FMN is required as a cofactor. Expressed in green seedling, leaves, flowers (anthers, pistil, petal and stamen), and to a lower extent in roots and siliques. Specifically expressed in filament during anther dehiscence initiation.

It localises to the peroxisome. The catalysed reaction is (1S,2S)-OPC-8 + NADP(+) = (9S,13S,15Z)-12-oxophyto-10,15-dienoate + NADPH + H(+). It functions in the pathway lipid metabolism; oxylipin biosynthesis. In terms of biological role, specifically cleaves olefinic bonds in cyclic enones. Involved in the biosynthesis of jasmonic acid (JA) and perhaps in biosynthesis or metabolism of other oxylipin signaling moleclules. Required for the spatial and temporal regulation of JA levels during dehiscence of anthers, promoting the stomium degeneration program. In vitro, reduces 9S,13S-12-oxophytodienoic acid (9S,13S-OPDA) and 9R,13R-OPDA to 9S,13S-OPC-8:0 and 9R,13R-OPC-8:0, respectively. Can detoxify the explosive 2,4,6-trinitrotoluene (TNT) in vitro by catalyzing its nitroreduction to form hydroxylamino-dinitrotoluene (HADNT). The polypeptide is 12-oxophytodienoate reductase 3 (Arabidopsis thaliana (Mouse-ear cress)).